Here is a 444-residue protein sequence, read N- to C-terminus: Type I restriction enzyme EcoDI specificity subunit (444 aa).

This sequence belongs to the type-I restriction system S methylase family. As to quaternary structure, the type I restriction/modification system is composed of three polypeptides R, M and S; the restriction enzyme has stoichiometry R(2)M(2)S(1) while the methyltransferase is M(2)S(1).

In terms of biological role, the specificity (S) subunit of a type I restriction enzyme; this subunit dictates DNA sequence specificity. The M and S subunits together form a methyltransferase (MTase) that methylates two adenine residues of the sequence 5'-TTAN(7)GTCY-3'. In the presence of the R subunit the complex can also act as an endonuclease, binding to the same target sequence but cutting the DNA some distance from this site. Whether the DNA is cut or modified depends on the methylation state of the target sequence. When the target site is unmodified, the DNA is cut. When the target site is hemimethylated, the complex acts as a maintenance MTase modifying the DNA so that both strands become methylated. After locating a non-methylated recognition site, the enzyme complex serves as a molecular motor that translocates DNA in an ATP-dependent manner until a collision occurs that triggers cleavage. The sequence is that of Type I restriction enzyme EcoDI specificity subunit from Escherichia coli.